The chain runs to 529 residues: Phosphoenolpyruvate carboxykinase (ATP) (529 aa).

3 residues coordinate substrate: Arg60, Tyr195, and Lys201. ATP is bound by residues Lys201, His220, and 236–244 (GLSGTGKTT). Positions 201 and 220 each coordinate Mn(2+). Residue Asp257 participates in Mn(2+) binding. 3 residues coordinate ATP: Glu285, Arg323, and Ser448. Arg323 provides a ligand contact to substrate.

Belongs to the phosphoenolpyruvate carboxykinase (ATP) family. Mn(2+) serves as cofactor.

Its subcellular location is the cytoplasm. The enzyme catalyses oxaloacetate + ATP = phosphoenolpyruvate + ADP + CO2. The protein operates within carbohydrate biosynthesis; gluconeogenesis. Its function is as follows. Involved in the gluconeogenesis. Catalyzes the conversion of oxaloacetate (OAA) to phosphoenolpyruvate (PEP) through direct phosphoryl transfer between the nucleoside triphosphate and OAA. The polypeptide is Phosphoenolpyruvate carboxykinase (ATP) (Geobacter sp. (strain M21)).